A 304-amino-acid chain; its full sequence is tRNA-uridine aminocarboxypropyltransferase 1 (304 aa).

2 disordered regions span residues 1–29 (MALSPSVVPQESKEDNANCVETKPSQTTS) and 165–193 (RNKADNLDVPPRKLKRTTDEEGWDLHEST). Basic and acidic residues predominate over residues 180-193 (RTTDEEGWDLHEST). A DXTW motif is present at residues 206-209 (DSTW).

This sequence belongs to the TDD superfamily. DTWD1 family.

It localises to the nucleus. It catalyses the reaction a uridine in tRNA + S-adenosyl-L-methionine = a 3-[(3S)-3-amino-3-carboxypropyl]uridine in tRNA + S-methyl-5'-thioadenosine + H(+). Its function is as follows. Catalyzes the formation of 3-(3-amino-3-carboxypropyl)uridine (acp3U) at position 20 in the D-loop of several cytoplasmic tRNAs (acp3U(20)). This is tRNA-uridine aminocarboxypropyltransferase 1 from Mus musculus (Mouse).